Consider the following 137-residue polypeptide: Sec-independent protein translocase protein TatB (137 aa).

A helical transmembrane segment spans residues 2-22 (FANIGWGEMLILVIAGLVILG). Residues 92 to 137 (FFTGKFDQQNGKPAAGQEKPVTPVNPPVTATPPSESTATPFDSDAT) form a disordered region. Residues 122 to 131 (TPPSESTATP) show a composition bias toward low complexity.

It belongs to the TatB family. As to quaternary structure, the Tat system comprises two distinct complexes: a TatABC complex, containing multiple copies of TatA, TatB and TatC subunits, and a separate TatA complex, containing only TatA subunits. Substrates initially bind to the TatABC complex, which probably triggers association of the separate TatA complex to form the active translocon.

Its subcellular location is the cell membrane. Part of the twin-arginine translocation (Tat) system that transports large folded proteins containing a characteristic twin-arginine motif in their signal peptide across membranes. Together with TatC, TatB is part of a receptor directly interacting with Tat signal peptides. TatB may form an oligomeric binding site that transiently accommodates folded Tat precursor proteins before their translocation. This is Sec-independent protein translocase protein TatB from Mycobacterium sp. (strain JLS).